The following is a 170-amino-acid chain: Ribosome-binding factor A (170 aa).

Positions 123–170 (AKAGVYAGDEDPYVKPRVIGEDEDDDDEEGDEDGDDVDRSAPGYEPAH) are disordered. Residues 143–158 (EDEDDDDEEGDEDGDD) are compositionally biased toward acidic residues.

It belongs to the RbfA family. In terms of assembly, monomer. Binds 30S ribosomal subunits, but not 50S ribosomal subunits or 70S ribosomes.

It localises to the cytoplasm. In terms of biological role, one of several proteins that assist in the late maturation steps of the functional core of the 30S ribosomal subunit. Associates with free 30S ribosomal subunits (but not with 30S subunits that are part of 70S ribosomes or polysomes). Required for efficient processing of 16S rRNA. May interact with the 5'-terminal helix region of 16S rRNA. The sequence is that of Ribosome-binding factor A from Clavibacter sepedonicus (Clavibacter michiganensis subsp. sepedonicus).